The following is a 458-amino-acid chain: Bifunctional protein GlmU (458 aa).

The tract at residues 1 to 230 (MHKRTAVVLA…EREILGINSR (230 aa)) is pyrophosphorylase. UDP-N-acetyl-alpha-D-glucosamine-binding positions include 9 to 12 (LAAG), lysine 23, glutamine 73, and 78 to 79 (GT). Aspartate 103 provides a ligand contact to Mg(2+). Residues glycine 140, glutamate 155, asparagine 170, and asparagine 228 each contribute to the UDP-N-acetyl-alpha-D-glucosamine site. Asparagine 228 lines the Mg(2+) pocket. A linker region spans residues 231–251 (VQLAEAEAVLQDRLRRKWMDA). The tract at residues 252–458 (GVTLIDPPSV…FLGRKHKGSQ (207 aa)) is N-acetyltransferase. UDP-N-acetyl-alpha-D-glucosamine-binding residues include arginine 333 and lysine 351. Residue histidine 363 is the Proton acceptor of the active site. UDP-N-acetyl-alpha-D-glucosamine-binding residues include tyrosine 366 and asparagine 377. Residues alanine 380, 386–387 (NY), serine 405, alanine 423, and arginine 440 each bind acetyl-CoA.

This sequence in the N-terminal section; belongs to the N-acetylglucosamine-1-phosphate uridyltransferase family. It in the C-terminal section; belongs to the transferase hexapeptide repeat family. Homotrimer. It depends on Mg(2+) as a cofactor.

It localises to the cytoplasm. The enzyme catalyses alpha-D-glucosamine 1-phosphate + acetyl-CoA = N-acetyl-alpha-D-glucosamine 1-phosphate + CoA + H(+). It carries out the reaction N-acetyl-alpha-D-glucosamine 1-phosphate + UTP + H(+) = UDP-N-acetyl-alpha-D-glucosamine + diphosphate. The protein operates within nucleotide-sugar biosynthesis; UDP-N-acetyl-alpha-D-glucosamine biosynthesis; N-acetyl-alpha-D-glucosamine 1-phosphate from alpha-D-glucosamine 6-phosphate (route II): step 2/2. It functions in the pathway nucleotide-sugar biosynthesis; UDP-N-acetyl-alpha-D-glucosamine biosynthesis; UDP-N-acetyl-alpha-D-glucosamine from N-acetyl-alpha-D-glucosamine 1-phosphate: step 1/1. It participates in bacterial outer membrane biogenesis; LPS lipid A biosynthesis. In terms of biological role, catalyzes the last two sequential reactions in the de novo biosynthetic pathway for UDP-N-acetylglucosamine (UDP-GlcNAc). The C-terminal domain catalyzes the transfer of acetyl group from acetyl coenzyme A to glucosamine-1-phosphate (GlcN-1-P) to produce N-acetylglucosamine-1-phosphate (GlcNAc-1-P), which is converted into UDP-GlcNAc by the transfer of uridine 5-monophosphate (from uridine 5-triphosphate), a reaction catalyzed by the N-terminal domain. The chain is Bifunctional protein GlmU from Heliobacterium modesticaldum (strain ATCC 51547 / Ice1).